We begin with the raw amino-acid sequence, 38 residues long: Potassium channel toxin alpha-KTx 2.13 (38 aa).

Cystine bridges form between cysteine 7–cysteine 29, cysteine 13–cysteine 34, and cysteine 17–cysteine 36.

It belongs to the short scorpion toxin superfamily. Potassium channel inhibitor family. Alpha-KTx 02 subfamily. Expressed by the venom gland.

Its subcellular location is the secreted. In terms of biological role, selective inhibitor of voltage-gated potassium channels, blocks the Kv1.2/KCNA2 (Kd=1.3 nM) and Kv1.3/KCNA3 (Kd=7.2 nM) channels. Association and dissociation rates of the toxin are slower for Kv1.2/KCNA2 than for Kv1.3/KCNA3. The polypeptide is Potassium channel toxin alpha-KTx 2.13 (Centruroides suffusus (Durango bark scorpion)).